A 96-amino-acid chain; its full sequence is Co-chaperonin GroES (96 aa).

Belongs to the GroES chaperonin family. As to quaternary structure, heptamer of 7 subunits arranged in a ring. Interacts with the chaperonin GroEL.

Its subcellular location is the cytoplasm. In terms of biological role, together with the chaperonin GroEL, plays an essential role in assisting protein folding. The GroEL-GroES system forms a nano-cage that allows encapsulation of the non-native substrate proteins and provides a physical environment optimized to promote and accelerate protein folding. GroES binds to the apical surface of the GroEL ring, thereby capping the opening of the GroEL channel. This is Co-chaperonin GroES from Idiomarina loihiensis (strain ATCC BAA-735 / DSM 15497 / L2-TR).